The sequence spans 625 residues: LGDVSEASGARWVAQSVSPSPDRFGLFGAPPLSEGYVVLLGDERSKPSPPPSEFLLSVFRRNRAARLVCLSIVLSFVCSLLFWTASKNMGQTVTTPLSLTLEHWEDVQRIASNQSVDVKKRRWVTFCSAEWPTFGVGWPQDGTFNLDIILQVKSKVFSPGPHGHPDQVPYIVTWEAIAYEPPPWVKPFVSPKLSPSPTAPILPSGPSTQPPPRSALYPALTPSIKPRPSKPQVLSDNGGPLIDLLSEDPPPYGGQGLSSSDGDGDREEATSTSEIPAPSPIVSRLRGKRDPPAADSTTSRAFPLRLGGNGQLQYWPFSSSDLYNWKNNNPSFSEDPGKLTALIESVLTTHQPTWDDCQQLLGTLLTGEEKQRVLLEARKAVRGNDGRPTQLPNEVDAAFPLERPDWDYTTQRGRNHLVLYRQLLLAGLQNAGRSPTNLAKVKGITQGPNESPSAFLERLKEAYRRYTPYDPEDPGQETNVSMSFIWQSAPDIGRKLERLEDLKSKTLGDLVREAERIFNKRETPEEREERVRRETEEKEERRRAEEEQKEKERDRRRHREMSKLLATVVSGQRQDRQGGERRRPQLDKDQCAYCKEKGHWAKDCPKKPRGPRGPRPQTSLLTLDD.

The Cytoplasmic segment spans residues 1 to 66; sequence LGDVSEASGA…SVFRRNRAAR (66 aa). The helical transmembrane segment at 67 to 86 threads the bilayer; the sequence is LVCLSIVLSFVCSLLFWTAS. At 87–625 the chain is on the extracellular side; sequence KNMGQTVTTP…PQTSLLTLDD (539 aa). Asn113 carries N-linked (GlcNAc...) asparagine; by host glycosylation. The disordered stretch occupies residues 195-305; it reads PSPTAPILPS…STTSRAFPLR (111 aa). Residue Asn479 is glycosylated (N-linked (GlcNAc...) asparagine; by host). Basic and acidic residues-rich tracts occupy residues 522–553 and 573–606; these read ETPE…EKER and RQDR…DCPK. Residues 522 to 625 form a disordered region; that stretch reads ETPEEREERV…PQTSLLTLDD (104 aa).

In terms of processing, glycosylated by host. Post-translationally, cleaved by host near the middle of the molecule, releasing the c-terminal half containing capsid and nucleoprotein domains op GAG.

It localises to the host cell membrane. In terms of biological role, plays a role in viral particle release. Presumably acts by facilitating the fission of the virion bud at the cell surface. May prevent the antiviral activity of murine APOBEC3. The chain is Glyco-Gag protein from AKV murine leukemia virus (AKR (endogenous) murine leukemia virus).